A 550-amino-acid polypeptide reads, in one-letter code: ATP-dependent RNA helicase MSS116, mitochondrial (550 aa).

Residues 1–11 show a composition bias toward basic residues; the sequence is MPPPPKRKWPN. The N-terminal 41 residues, 1–41, are a transit peptide targeting the mitochondrion; that stretch reads MPPPPKRKWPNRPRGGGGANGSASGTPTTPRSTVAQQPKRP. Positions 1–51 are disordered; sequence MPPPPKRKWPNRPRGGGGANGSASGTPTTPRSTVAQQPKRPKVEDAAPAAE. Positions 71–99 match the Q motif motif; that stretch reads FSELSSVLDKSLLDGLDKMGFEFMSPVQQ. Residues 103–285 enclose the Helicase ATP-binding domain; it reads TELPSLSSDC…KIVLFPGFTH (183 aa). ATP is bound at residue 116-123; it reads AKTGTGKT. A DEAD box motif is present at residues 230–233; the sequence is DEAD. One can recognise a Helicase C-terminal domain in the interval 316 to 472; it reads ALSALIQEEH…KVPEQEAAIT (157 aa).

Belongs to the DEAD box helicase family. DDX18/HAS1 subfamily.

The protein localises to the mitochondrion matrix. The catalysed reaction is ATP + H2O = ADP + phosphate + H(+). ATP-dependent RNA helicase required for mitochondrial splicing of group I and II introns. Also required for efficient mitochondrial translation. In Phaeosphaeria nodorum (strain SN15 / ATCC MYA-4574 / FGSC 10173) (Glume blotch fungus), this protein is ATP-dependent RNA helicase MSS116, mitochondrial (MSS116).